The primary structure comprises 101 residues: Protein S100-A4 (101 aa).

Alanine 2 carries the post-translational modification N-acetylalanine. Lysine 7 carries the N6-acetyllysine modification. 2 consecutive EF-hand domains span residues 13–48 (VSTF…FLGK) and 50–85 (TDET…IAMM). Residues lysine 28 and glutamate 33 each coordinate Ca(2+). Residue lysine 35 is modified to N6-acetyllysine. Ca(2+)-binding residues include aspartate 63, asparagine 65, aspartate 67, glutamate 69, and glutamate 74.

The protein belongs to the S-100 family. Homodimer. Interacts with PPFIBP1 in a calcium-dependent mode. Interacts with PGLYRP1; this complex acts as a chemoattractant that promotes lymphocyte movement. Interacts with MYH9; this interaction increases cell motility. Interacts with Annexin 2/ANXA2. Interacts with TP53; this interaction promotes TP53 degradation. Interacts with CCR5 and CXCR3. Interacts with FCGR3A; this interaction inhibits PKC-dependent phosphorylation of FCGR3A.

It is found in the secreted. The protein localises to the nucleus. Its subcellular location is the cytoplasm. Calcium-binding protein that plays a role in various cellular processes including motility, angiogenesis, cell differentiation, apoptosis, and autophagy. Increases cell motility and invasiveness by interacting with non-muscle myosin heavy chain (NMMHC) IIA/MYH9. Mechanistically, promotes filament depolymerization and increases the amount of soluble myosin-IIA, resulting in the formation of stable protrusions facilitating chemotaxis. Also modulates the pro-apoptotic function of TP53 by binding to its C-terminal transactivation domain within the nucleus and reducing its protein levels. Within the extracellular space, stimulates cytokine production including granulocyte colony-stimulating factor and CCL24 from T-lymphocytes. In addition, stimulates T-lymphocyte chemotaxis by acting as a chemoattractant complex with PGLYRP1 that promotes lymphocyte migration via CCR5 and CXCR3 receptors. This chain is Protein S100-A4 (S100A4), found in Bos taurus (Bovine).